A 524-amino-acid chain; its full sequence is Cytochrome P450 6k1 (524 aa).

Cysteine 464 lines the heme pocket.

The protein belongs to the cytochrome P450 family. The cofactor is heme.

It localises to the endoplasmic reticulum membrane. The protein localises to the microsome membrane. The polypeptide is Cytochrome P450 6k1 (CYP6K1) (Blattella germanica (German cockroach)).